Here is an 85-residue protein sequence, read N- to C-terminus: UPF0291 protein SGO_0570 (85 aa).

The segment at 56 to 85 (EDGNDVTPEKLRQVQREKGLHGRSLDDPNS) is disordered. Over residues 62–85 (TPEKLRQVQREKGLHGRSLDDPNS) the composition is skewed to basic and acidic residues.

This sequence belongs to the UPF0291 family.

It is found in the cytoplasm. The polypeptide is UPF0291 protein SGO_0570 (Streptococcus gordonii (strain Challis / ATCC 35105 / BCRC 15272 / CH1 / DL1 / V288)).